The primary structure comprises 95 residues: MKAYEVLYVIRPDLDDEAVAATVDKLSEVVTNNGGADVAIDKWGKRRLAYEVNDYREGFYILMNFNGEARTAQEVERIMKISDAVVRFLTTKKED.

This sequence belongs to the bacterial ribosomal protein bS6 family.

In terms of biological role, binds together with bS18 to 16S ribosomal RNA. This is Small ribosomal subunit protein bS6 from Desulfitobacterium hafniense (strain DSM 10664 / DCB-2).